Consider the following 187-residue polypeptide: Large ribosomal subunit protein uL6 (187 aa).

The disordered stretch occupies residues 151 to 170; sequence EAARIRSLRPPEPYKGKGIK.

The protein belongs to the universal ribosomal protein uL6 family. In terms of assembly, part of the 50S ribosomal subunit.

This protein binds to the 23S rRNA, and is important in its secondary structure. It is located near the subunit interface in the base of the L7/L12 stalk, and near the tRNA binding site of the peptidyltransferase center. This chain is Large ribosomal subunit protein uL6, found in Chloroflexus aurantiacus (strain ATCC 29366 / DSM 635 / J-10-fl).